The primary structure comprises 374 residues: Homeobox protein knotted-1-like 13 (374 aa).

The segment at 214-242 (TGASPGEGTGATMSDGEDDQADSEANMYD) is disordered. One can recognise an ELK domain in the interval 270 to 290 (ELKHELKQGYKEKLIDIREEI). Positions 291 to 354 (LRKRRAGKLP…NQRKRNWHSN (64 aa)) form a DNA-binding region, homeobox; TALE-type. The tract at residues 347–374 (RKRNWHSNPSSSTSVKTKRKSNAGDNNS) is disordered.

This sequence belongs to the TALE/KNOX homeobox family. Isoforms 1 and 2 are expressed in roots, stems, shoot meristem, leaf blades, leaf sheaths and flowers. Isoform 3 is expressed in stems, shoot meristem, rachis, leaf blades and leaf sheaths.

It is found in the nucleus. Functionally, isoform 3 acts as a transcription activator, but isoforms 1 and 2 do not. The protein is Homeobox protein knotted-1-like 13 (OSH45) of Oryza sativa subsp. japonica (Rice).